The following is a 20-amino-acid chain: Cupiennin-6f (20 aa).

Expressed by the venom gland.

Its subcellular location is the secreted. This Cupiennius salei (American wandering spider) protein is Cupiennin-6f.